Consider the following 372-residue polypeptide: MALNDFHVSEPYTLGIELEMQVINPPSYDLSQDSSTLIDAVKSRLTAGEIKHDITESMLEMATGVCRDIDQAAAQLSAMQHVILQAASEHHLGICGGGTHPFQKWQRQEVCDNERYQRTLENFGYLIQQATVFGQHVHVGCANGDDAIYLLHGLSHFVPHFIALSAASPYMQGSDTRFACARLNIFSAFPDNGPMPWVSNWQEFAGLFRRLSYTTMIDSIKDLHWDIRPSPAFGTVEVRVMDTPLTLDHAINMAGLIQATAHWLLTERPFKPQEQDYLLYKFNRFQACRYGLEGVLTDAYTGDRRRLADDTLRLLDNVTPSARKLGADSAIDALRLQVKKGGNEAQYMREFIADGGSLIGLVQKHCEIWAGQ.

Belongs to the glutamate--cysteine ligase type 2 family. YbdK subfamily. Homodimer.

It catalyses the reaction L-cysteine + L-glutamate + ATP = gamma-L-glutamyl-L-cysteine + ADP + phosphate + H(+). ATP-dependent carboxylate-amine ligase which exhibits weak glutamate--cysteine ligase activity. This chain is Putative glutamate--cysteine ligase 2 (ybdK), found in Salmonella choleraesuis (strain SC-B67).